The primary structure comprises 431 residues: Divergent protein kinase domain 1B (431 aa).

The Cytoplasmic segment spans residues 1 to 30 (MRRLRRLAHLVLFCPFSKRLQGRLPGLRVR). Positions 5–6 (RR) match the May mediate ER retention motif. Residues 31 to 51 (CIFLAWLGVFAGSWLVYVHYS) traverse the membrane as a helical segment. The Lumenal portion of the chain corresponds to 52 to 431 (SYSERCRGHV…WKKISNTKYS (380 aa)). 2 cysteine pairs are disulfide-bonded: cysteine 57–cysteine 94 and cysteine 62–cysteine 117.

The protein belongs to the DIPK family. Post-translationally, among the many cysteines in the lumenal domain, most are probably involved in disulfide bonds.

The protein resides in the endoplasmic reticulum membrane. The chain is Divergent protein kinase domain 1B from Homo sapiens (Human).